A 390-amino-acid chain; its full sequence is Ankyrin repeat domain-containing protein 63 (390 aa).

5 ANK repeats span residues 11-40, 46-79, 83-112, 116-145, and 153-182; these read AGTR…RSII, QGRT…AVNL, RGRT…DPEA, AGNS…RLGL, and AGLT…RAAA. Disordered stretches follow at residues 181–213 and 226–245; these read AAAA…SPRR and AGGH…ELAS. S193 carries the post-translational modification Phosphoserine. Position 304 is a phosphoserine (S304). The segment at 320 to 377 is disordered; that stretch reads VGLSPHPEGCPGSGRLGLRRRSTAPDIPSLVGEASGPESGPELENNALPFSVPGPKPW.

The chain is Ankyrin repeat domain-containing protein 63 from Mus musculus (Mouse).